A 77-amino-acid chain; its full sequence is MGSFSIWHWLVVLAIVVLVFGTKKLRNLGSDLGGAVRGFKEGMKGAEEENTQPPPSHQQVTGHSIKSEIEEKDQTKV.

Residues 1 to 21 traverse the membrane as a helical segment; it reads MGSFSIWHWLVVLAIVVLVFG. The segment at 40 to 77 is disordered; it reads KEGMKGAEEENTQPPPSHQQVTGHSIKSEIEEKDQTKV. Residues 65–77 show a composition bias toward basic and acidic residues; sequence IKSEIEEKDQTKV.

It belongs to the TatA/E family. As to quaternary structure, the Tat system comprises two distinct complexes: a TatABC complex, containing multiple copies of TatA, TatB and TatC subunits, and a separate TatA complex, containing only TatA subunits. Substrates initially bind to the TatABC complex, which probably triggers association of the separate TatA complex to form the active translocon.

It localises to the cell inner membrane. Its function is as follows. Part of the twin-arginine translocation (Tat) system that transports large folded proteins containing a characteristic twin-arginine motif in their signal peptide across membranes. TatA could form the protein-conducting channel of the Tat system. This Nitrosomonas eutropha (strain DSM 101675 / C91 / Nm57) protein is Sec-independent protein translocase protein TatA.